A 452-amino-acid polypeptide reads, in one-letter code: Bifunctional protein GlmU (452 aa).

The pyrophosphorylase stretch occupies residues 1–233 (MTDRPFAALI…AWEVAGVNSR (233 aa)). UDP-N-acetyl-alpha-D-glucosamine contacts are provided by residues 11–14 (LAAG), Lys-25, Gln-76, 81–82 (GT), 104–106 (YGD), Gly-144, Glu-159, Asn-174, and Asn-231. Residue Asp-106 coordinates Mg(2+). Residue Asn-231 coordinates Mg(2+). The tract at residues 234–254 (AELAAVEAEWQRRRRLAAMAD) is linker. The interval 255–452 (GATLIAPETV…AMKIKKAARK (198 aa)) is N-acetyltransferase. UDP-N-acetyl-alpha-D-glucosamine is bound by residues Arg-320 and Lys-338. His-350 (proton acceptor) is an active-site residue. Positions 353 and 364 each coordinate UDP-N-acetyl-alpha-D-glucosamine. Acetyl-CoA contacts are provided by residues Ala-367, 373–374 (NY), Ser-392, Ala-410, and Arg-427.

This sequence in the N-terminal section; belongs to the N-acetylglucosamine-1-phosphate uridyltransferase family. It in the C-terminal section; belongs to the transferase hexapeptide repeat family. Homotrimer. Mg(2+) serves as cofactor.

It localises to the cytoplasm. It catalyses the reaction alpha-D-glucosamine 1-phosphate + acetyl-CoA = N-acetyl-alpha-D-glucosamine 1-phosphate + CoA + H(+). The catalysed reaction is N-acetyl-alpha-D-glucosamine 1-phosphate + UTP + H(+) = UDP-N-acetyl-alpha-D-glucosamine + diphosphate. The protein operates within nucleotide-sugar biosynthesis; UDP-N-acetyl-alpha-D-glucosamine biosynthesis; N-acetyl-alpha-D-glucosamine 1-phosphate from alpha-D-glucosamine 6-phosphate (route II): step 2/2. It participates in nucleotide-sugar biosynthesis; UDP-N-acetyl-alpha-D-glucosamine biosynthesis; UDP-N-acetyl-alpha-D-glucosamine from N-acetyl-alpha-D-glucosamine 1-phosphate: step 1/1. Its pathway is bacterial outer membrane biogenesis; LPS lipid A biosynthesis. In terms of biological role, catalyzes the last two sequential reactions in the de novo biosynthetic pathway for UDP-N-acetylglucosamine (UDP-GlcNAc). The C-terminal domain catalyzes the transfer of acetyl group from acetyl coenzyme A to glucosamine-1-phosphate (GlcN-1-P) to produce N-acetylglucosamine-1-phosphate (GlcNAc-1-P), which is converted into UDP-GlcNAc by the transfer of uridine 5-monophosphate (from uridine 5-triphosphate), a reaction catalyzed by the N-terminal domain. The protein is Bifunctional protein GlmU of Rhizorhabdus wittichii (strain DSM 6014 / CCUG 31198 / JCM 15750 / NBRC 105917 / EY 4224 / RW1) (Sphingomonas wittichii).